A 427-amino-acid polypeptide reads, in one-letter code: Putative transporter YdfJ (427 aa).

Residues 1-7 lie on the Cytoplasmic side of the membrane; sequence MDFQLYS. 2 helical membrane-spanning segments follow: residues 8 to 28 and 29 to 49; these read LGAA…AMAL and ILAM…AFIF. At 50–74 the chain is on the cytoplasmic side; it reads GKMGDRIGRKKVLFITITMMGICTT. The helical transmembrane segment at 75–95 threads the bilayer; that stretch reads LIGVLPTYAQIGVFAPILLVT. At 96 to 97 the chain is on the periplasmic side; that stretch reads LR. The helical transmembrane segment at 98 to 118 threads the bilayer; the sequence is IIQGLGAGAEISGAGTMLAEY. Residues 119 to 132 lie on the Cytoplasmic side of the membrane; sequence APKGKRGIISSFVA. The chain crosses the membrane as a helical span at residues 133–153; that stretch reads MGTNCGTLSATAIWAFMFFIL. The Periplasmic portion of the chain corresponds to 154-157; the sequence is SKEE. The helical transmembrane segment at 158-178 threads the bilayer; it reads LLAWGWRIPFLASVVVMVFAI. At 179–225 the chain is on the cytoplasmic side; it reads WLRMNLKESPVFEKVNDSNQPTAKPAPAGSMFQSKSFWLATGLRFGQ. The chain crosses the membrane as a helical span at residues 226–246; the sequence is AGNSGLIQTFLAGYLVQTLLF. Over 247 to 251 the chain is Periplasmic; the sequence is NKAIP. A helical membrane pass occupies residues 252–272; sequence TDALMISSILGFMTIPFLGWL. At 273–279 the chain is on the cytoplasmic side; that stretch reads SDKIGRR. The chain crosses the membrane as a helical span at residues 280 to 300; sequence IPYIIMNTSAIVLAWPMLSII. Residues 301–307 are Periplasmic-facing; the sequence is VDKSYAP. Residues 308-328 traverse the membrane as a helical segment; the sequence is STIMVALIVIHNCAVLGLFAL. Residues 329–351 lie on the Cytoplasmic side of the membrane; sequence ENITMAEMFGCKNRFTRMAISKE. The chain crosses the membrane as a helical span at residues 352–372; sequence IGGLIASGFGPILAGIFCTMT. Glu-373 is a topological domain (periplasmic). The helical transmembrane segment at 374–394 threads the bilayer; sequence SWYPIAIMIMAYSVIGLISAL. The Cytoplasmic segment spans residues 395-427; that stretch reads KMPEVKDRDLSALEDAAEDQPRVVRAAQPSRSL.

It belongs to the major facilitator superfamily. Metabolite:H+ Symporter (MHS) family (TC 2.A.1.6) family.

The protein localises to the cell inner membrane. Functionally, when overexpressed in human HEK-293 cells forms an inward rectifying potassium channel. The protein is Putative transporter YdfJ (ydfJ) of Escherichia coli (strain K12).